The primary structure comprises 252 residues: Adenosylcobinamide-GDP ribazoletransferase (252 aa).

Transmembrane regions (helical) follow at residues 36–56, 59–79, 109–129, 133–153, 170–192, 199–218, and 228–248; these read LVPI…MLLV, FFYK…TGGI, VGTN…VILT, PAYM…GSIV, SFID…VIFL, GYII…KYFT, and ILGA…YAVL.

This sequence belongs to the CobS family. Mg(2+) is required as a cofactor.

It localises to the cell membrane. It catalyses the reaction alpha-ribazole + adenosylcob(III)inamide-GDP = adenosylcob(III)alamin + GMP + H(+). The enzyme catalyses alpha-ribazole 5'-phosphate + adenosylcob(III)inamide-GDP = adenosylcob(III)alamin 5'-phosphate + GMP + H(+). Its pathway is cofactor biosynthesis; adenosylcobalamin biosynthesis; adenosylcobalamin from cob(II)yrinate a,c-diamide: step 7/7. In terms of biological role, joins adenosylcobinamide-GDP and alpha-ribazole to generate adenosylcobalamin (Ado-cobalamin). Also synthesizes adenosylcobalamin 5'-phosphate from adenosylcobinamide-GDP and alpha-ribazole 5'-phosphate. In Clostridium acetobutylicum (strain ATCC 824 / DSM 792 / JCM 1419 / IAM 19013 / LMG 5710 / NBRC 13948 / NRRL B-527 / VKM B-1787 / 2291 / W), this protein is Adenosylcobinamide-GDP ribazoletransferase.